A 366-amino-acid chain; its full sequence is Mitogen-activated protein kinase sakA (366 aa).

In terms of domain architecture, Protein kinase spans 20–299 (YTDLQPVGMG…AGEALAHEYL (280 aa)). Residues 26-34 (VGMGAFGLV) and lysine 49 each bind ATP. Aspartate 141 functions as the Proton acceptor in the catalytic mechanism. Threonine 171 is subject to Phosphothreonine. The TXY signature appears at 171–173 (TGY). Residue tyrosine 173 is modified to Phosphotyrosine.

The protein belongs to the protein kinase superfamily. Ser/Thr protein kinase family. MAP kinase subfamily. HOG1 sub-subfamily. In terms of assembly, interacts with the AGC kinase ypkA. Interacts with sakA upon osmotic and cell wall stresses. Mg(2+) is required as a cofactor. In terms of processing, dually phosphorylated on Thr-171 and Tyr-173, which activates the enzyme. Environmental stresses such as high temperature, osmotic stress, cold stress or ethanol stress modulate the activation of sakA via phosphorylation.

It is found in the cytoplasm. It localises to the nucleus. It carries out the reaction L-seryl-[protein] + ATP = O-phospho-L-seryl-[protein] + ADP + H(+). The catalysed reaction is L-threonyl-[protein] + ATP = O-phospho-L-threonyl-[protein] + ADP + H(+). Its activity is regulated as follows. Activated by tyrosine and threonine phosphorylation. Deactivated by protein phosphatase 2C homolog 2 ptcB. Proline-directed serine/threonine-protein kinase involved in a signal transduction pathway that is activated by changes in the osmolarity of the extracellular environment. Controls osmotic regulation of transcription of target genes. Involved in environmental stress response. With mpkC, plays a redundant or cooperative role in the conidial stress resistance. Also plays a supportive role in osmotic stress adaptation when sakA is deficient. Involved in paradoxical growth, the cell wall integrity (CWI) pathway and biofilm formation. Also collaborates with mpkC to allow ful virulence in a neutropenic murine model ofinvasive pulmonary aspergillosis. MpkC and sakA have both independent and collaborative functions during the transcriptional response to transient osmotic stress and sakA not only seems to modulate pathways involved in nucleotide, fatty acid, nitrogen and organic acid biosynthesis but is also important for the activation of genes involved in mitochondrial and endoplasmic reticulum functions. In Aspergillus fumigatus (strain ATCC MYA-4609 / CBS 101355 / FGSC A1100 / Af293) (Neosartorya fumigata), this protein is Mitogen-activated protein kinase sakA.